A 364-amino-acid polypeptide reads, in one-letter code: Ribosomal RNA large subunit methyltransferase F (364 aa).

The interval 1 to 52 (MPKPAIKTAAKLAMSSAGKRGKPSTPKSLAKPQTTKPKTASKLKAKHGEQKR) is disordered. Residues 25–38 (TPKSLAKPQTTKPK) are compositionally biased toward polar residues.

The protein belongs to the methyltransferase superfamily. METTL16/RlmF family.

It localises to the cytoplasm. The enzyme catalyses adenosine(1618) in 23S rRNA + S-adenosyl-L-methionine = N(6)-methyladenosine(1618) in 23S rRNA + S-adenosyl-L-homocysteine + H(+). Specifically methylates the adenine in position 1618 of 23S rRNA. This chain is Ribosomal RNA large subunit methyltransferase F, found in Shewanella sp. (strain ANA-3).